We begin with the raw amino-acid sequence, 364 residues long: Aminomethyltransferase (364 aa).

Belongs to the GcvT family. In terms of assembly, the glycine cleavage system is composed of four proteins: P, T, L and H.

The catalysed reaction is N(6)-[(R)-S(8)-aminomethyldihydrolipoyl]-L-lysyl-[protein] + (6S)-5,6,7,8-tetrahydrofolate = N(6)-[(R)-dihydrolipoyl]-L-lysyl-[protein] + (6R)-5,10-methylene-5,6,7,8-tetrahydrofolate + NH4(+). Functionally, the glycine cleavage system catalyzes the degradation of glycine. The protein is Aminomethyltransferase of Escherichia coli O81 (strain ED1a).